A 301-amino-acid chain; its full sequence is Glycine--tRNA ligase alpha subunit (301 aa).

Belongs to the class-II aminoacyl-tRNA synthetase family. In terms of assembly, tetramer of two alpha and two beta subunits.

The protein localises to the cytoplasm. It catalyses the reaction tRNA(Gly) + glycine + ATP = glycyl-tRNA(Gly) + AMP + diphosphate. This Shewanella loihica (strain ATCC BAA-1088 / PV-4) protein is Glycine--tRNA ligase alpha subunit.